Consider the following 424-residue polypeptide: Hemagglutinin-esterase (424 aa).

An N-terminal signal peptide occupies residues 1–16 (MFLLPRFILVSCIIGS). Positions 7–127 (FILVSCIIGS…SNDIWMQNKG (121 aa)) are esterase domain 1. Residues 17 to 392 (LGFYNPPTNV…PICVYDPLPV (376 aa)) are Virion surface-facing. Residue Ser40 is the Nucleophile of the active site. Cys44 and Cys65 form a disulfide bridge. Asn54, Asn89, Asn114, Asn153, Asn236, and Asn301 each carry an N-linked (GlcNAc...) asparagine; by host glycan. 3 disulfide bridges follow: Cys113-Cys162, Cys197-Cys276, and Cys205-Cys249. The receptor binding stretch occupies residues 128–266 (LFYTQVYKNM…GNYLAISNEL (139 aa)). The tract at residues 267-379 (LLTVPTKAIC…RCPTAADINN (113 aa)) is esterase domain 2. Cys307 and Cys312 are joined by a disulfide. A glycan (N-linked (GlcNAc...) asparagine; by host) is linked at Asn316. Catalysis depends on charge relay system residues Asp326 and His329. A disulfide bond links Cys347 and Cys371. N-linked (GlcNAc...) asparagine; by host glycosylation is present at Asn358. Residues 393-413 (ILLGILLGVAVIIIVVLLLYF) form a helical membrane-spanning segment. Residues 414–424 (MVDNGTRLHDA) are Intravirion-facing. N-linked (GlcNAc...) asparagine; by host glycosylation occurs at Asn417.

Belongs to the influenza type C/coronaviruses hemagglutinin-esterase family. In terms of assembly, homodimer; disulfide-linked. Forms a complex with the M protein in the pre-Golgi. Associates then with S-M complex to form a ternary complex S-M-HE. Post-translationally, N-glycosylated in the host RER.

The protein localises to the virion membrane. It is found in the host cell membrane. The enzyme catalyses N-acetyl-9-O-acetylneuraminate + H2O = N-acetylneuraminate + acetate + H(+). It carries out the reaction N-acetyl-4-O-acetylneuraminate + H2O = N-acetylneuraminate + acetate + H(+). In terms of biological role, structural protein that makes short spikes at the surface of the virus. Contains receptor binding and receptor-destroying activities. Mediates de-O-acetylation of N-acetyl-4-O-acetylneuraminic acid, which is probably the receptor determinant recognized by the virus on the surface of erythrocytes and susceptible cells. This receptor-destroying activity is important for virus release as it probably helps preventing self-aggregation and ensures the efficient spread of the progeny virus from cell to cell. May serve as a secondary viral attachment protein for initiating infection, the spike protein being the major one. May become a target for both the humoral and the cellular branches of the immune system. This chain is Hemagglutinin-esterase, found in Homo sapiens (Human).